The sequence spans 318 residues: Cytochrome f (318 aa).

An N-terminal signal peptide occupies residues 1-34; the sequence is MKNNYLANLIKTLQAIVVSVALLAPLVLPSAVNA. 4 residues coordinate heme: Phe-35, Cys-55, Cys-58, and His-59. A helical transmembrane segment spans residues 284-304; the sequence is VKGLIAFFFTVILAQILLVLK.

Belongs to the cytochrome f family. In terms of assembly, the 4 large subunits of the cytochrome b6-f complex are cytochrome b6, subunit IV (17 kDa polypeptide, petD), cytochrome f and the Rieske protein, while the 4 small subunits are PetG, PetL, PetM and PetN. The complex functions as a dimer. Heme serves as cofactor.

Its subcellular location is the plastid. It localises to the chloroplast thylakoid membrane. Functionally, component of the cytochrome b6-f complex, which mediates electron transfer between photosystem II (PSII) and photosystem I (PSI), cyclic electron flow around PSI, and state transitions. This Rhodomonas salina (Cryptomonas salina) protein is Cytochrome f.